A 172-amino-acid chain; its full sequence is Translation initiation factor IF-3 (172 aa).

This sequence belongs to the IF-3 family. Monomer.

It is found in the cytoplasm. In terms of biological role, IF-3 binds to the 30S ribosomal subunit and shifts the equilibrium between 70S ribosomes and their 50S and 30S subunits in favor of the free subunits, thus enhancing the availability of 30S subunits on which protein synthesis initiation begins. This Campylobacter fetus subsp. fetus (strain 82-40) protein is Translation initiation factor IF-3.